The following is a 471-amino-acid chain: dTDP-4-dehydro-6-deoxy-alpha-D-glucopyranose 2,3-dehydratase (471 aa).

Residues Trp67, 155 to 159 (TRSNY), Ser193, Asn238, Trp288, Arg351, 367 to 369 (QCT), 372 to 373 (NY), and 405 to 408 (EGGR) each bind dTDP-4-dehydro-6-deoxy-alpha-D-glucose.

Belongs to the hexose 2,3-dehydratase family. As to quaternary structure, homodimer.

The catalysed reaction is dTDP-4-dehydro-6-deoxy-alpha-D-glucose = dTDP-3,4-didehydro-2,6-dideoxy-alpha-D-glucose + H2O. It functions in the pathway antibiotic biosynthesis. Its function is as follows. Involved in the biosynthesis of the 2,3,6-trideoxysugar L-epivancosamine, the terminal sugar added to the aglycone scaffold of chloroeremomycin, a member of the glycopeptide antibiotics vancomycin family. Catalyzes the removal of the hydroxyl group at position C-2 of the hexose ring of dTDP-4-dehydro-6-deoxy-alpha-D-glucopyranose, and the oxidation of the hydroxyl group at position C-3 to form a carbonyl functionality. The product of the reaction, dTDP-2,6-dideoxy-D-glycero-hex-2-enos-4-ulose, is a highly unstable diketosugar, which spontaneously forms dTDP-3,4-didehydro-2,6-dideoxy-alpha-D-glucose. In Amycolatopsis orientalis (Nocardia orientalis), this protein is dTDP-4-dehydro-6-deoxy-alpha-D-glucopyranose 2,3-dehydratase.